The primary structure comprises 575 residues: MPPGKVLQPVLKMKVDELFLYWLSEASTQRMLQDCLRRIKAPGRDQPTPGDGEQPGAWPTAPLAAPRPSGLEPPGTPGPGPALPLGAASSPRNAPHVRGTRRSAGTRVVQTRKEEPLPPATSQSIPTFYFPRGRPQDSVNVDAVISKIESTFARFPHERATMDDMGLVAKACGCPLYWKGPLFYGAGGERTGSVSVHKFVAMWRKILQNCHDDAAKFVHLLMSPGCNYLVQEDFVPFLQDVVNTHPGLSFLKEASEFHSRYITTVIQRIFYAVNRSWSGRITCAELRRSSFLQNVALLEEEADINQLTEFFSYEHFYVIYCKFWELDTDHDLLIDADDLARHNDHALSTKMIDRIFSGAVTRGRKVQKEGKISYADFVWFLISEEDKKTPTSIEYWFRCMDLDGDGALSMFELEYFYEEQCRRLDSMAIEALPFQDCLCQMLDLVKPRTEGKITLQDLKRCKLANVFFDTFFNIEKYLDHEQKEQISLLRDGDSGGPELSDWEKYAAEEYDILVAEETAGEPWEDGFEAELSPVEQKLSALRSPLAQRPFFEAPSPLGAVDLYEYACGDEDLEPL.

Residues Ala-41–Pro-131 are disordered. Residues Lys-388–Arg-423 form the EF-hand domain. 4 residues coordinate Ca(2+): Asp-401, Asp-403, Asp-405, and Glu-412.

PP2A consists of a common heterodimeric core enzyme, composed of a 36 kDa catalytic subunit (subunit C) and a 65 kDa constant regulatory subunit (PR65 or subunit A), that associates with a variety of regulatory subunits. Proteins that associate with the core dimer include three families of regulatory subunits B (the R2/B/PR55/B55, R3/B''/PR72/PR130/PR59 and R5/B'/B56 families), the 48 kDa variable regulatory subunit, viral proteins, and cell signaling molecules. Interacts with N-terminal region of CDC6. Interacts with NOD2.

The protein resides in the nucleus. The B regulatory subunit might modulate substrate selectivity and catalytic activity, and might also direct the localization of the catalytic enzyme to a particular subcellular compartment. This is Serine/threonine-protein phosphatase 2A regulatory subunit B'' subunit beta (PPP2R3B) from Homo sapiens (Human).